Reading from the N-terminus, the 474-residue chain is GTPase Der (474 aa).

EngA-type G domains follow at residues 2–166 and 212–385; these read LRIA…NVPE and LKIA…ETVS. GTP is bound by residues 8–15, 55–59, 118–121, 218–225, 265–269, and 330–333; these read GRPNVGKS, DTGGV, NKAD, DTAGL, and NKWD. Residues 386–470 enclose the KH-like domain; that stretch reads SKVPTPVVNK…PFDLEFKEKT (85 aa).

The protein belongs to the TRAFAC class TrmE-Era-EngA-EngB-Septin-like GTPase superfamily. EngA (Der) GTPase family. As to quaternary structure, associates with the 50S ribosomal subunit.

In terms of biological role, GTPase that plays an essential role in the late steps of ribosome biogenesis. In Chlamydia caviae (strain ATCC VR-813 / DSM 19441 / 03DC25 / GPIC) (Chlamydophila caviae), this protein is GTPase Der.